Consider the following 576-residue polypeptide: Catalase-peroxidase (576 aa).

Residues W95 to Y224 constitute a cross-link (tryptophyl-tyrosyl-methioninium (Trp-Tyr) (with M-250)). Catalysis depends on H96, which acts as the Proton acceptor. Positions Y224–M250 form a cross-link, tryptophyl-tyrosyl-methioninium (Tyr-Met) (with W-95). Residue H265 participates in heme b binding.

Belongs to the peroxidase family. Peroxidase/catalase subfamily. Homotetramer. Heme b serves as cofactor. In terms of processing, formation of the three residue Trp-Tyr-Met cross-link is important for the catalase, but not the peroxidase activity of the enzyme.

It catalyses the reaction H2O2 + AH2 = A + 2 H2O. It carries out the reaction 2 H2O2 = O2 + 2 H2O. Bifunctional enzyme with both catalase and broad-spectrum peroxidase activity. Also displays NADH oxidase, INH lyase and isonicotinoyl-NAD synthase activities. Important for stationary phase survival. This is Catalase-peroxidase (katG) from Rhodobacter capsulatus (Rhodopseudomonas capsulata).